Reading from the N-terminus, the 650-residue chain is Chaperone protein DnaK (650 aa).

T200 is subject to Phosphothreonine; by autocatalysis. Over residues 612 to 632 (GEGATAGAAAGAGAAGGQQAQ) the composition is skewed to low complexity. Residues 612–650 (GEGATAGAAAGAGAAGGQQAQPQDDNVVDAEFKEVNDKK) are disordered. Residues 641-650 (AEFKEVNDKK) are compositionally biased toward basic and acidic residues.

Belongs to the heat shock protein 70 family.

Functionally, acts as a chaperone. In Cupriavidus necator (strain ATCC 17699 / DSM 428 / KCTC 22496 / NCIMB 10442 / H16 / Stanier 337) (Ralstonia eutropha), this protein is Chaperone protein DnaK.